A 224-amino-acid polypeptide reads, in one-letter code: Small ribosomal subunit protein uS13 (224 aa).

The span at 1 to 17 shows a compositional bias: basic and acidic residues; sequence MSEKTDKTEKKQKKAEE. Disordered regions lie at residues 1-64 and 184-224; these read MSEK…AEEK and HERG…EDKK. Low complexity-rich tracts occupy residues 20–30 and 38–47; these read ETASAEAAPAK and AKPAEGAPAD. Residues 210–224 show a composition bias toward basic and acidic residues; that stretch reads KKGEQGGAAKKEDKK.

This sequence belongs to the universal ribosomal protein uS13 family. Part of the 30S ribosomal subunit. Forms a loose heterodimer with protein S19. Forms two bridges to the 50S subunit in the 70S ribosome.

In terms of biological role, located at the top of the head of the 30S subunit, it contacts several helices of the 16S rRNA. In the 70S ribosome it contacts the 23S rRNA (bridge B1a) and protein L5 of the 50S subunit (bridge B1b), connecting the 2 subunits; these bridges are implicated in subunit movement. This Methanocella arvoryzae (strain DSM 22066 / NBRC 105507 / MRE50) protein is Small ribosomal subunit protein uS13.